Consider the following 216-residue polypeptide: MQAGKPILYSYFRSSCSWRVRIALALKGIDYEIVPINLIKDGGQQFTEEFQTLNPMKQVPALKIDGITIVQSLAIMEYLEETRPIPRLLPQDPQKRAIVRMISDLIASGIQPLQNLSVLKQVGQENQMQWAQKVITSGFNALEKILQSTAGKYCVGDEVSMADVCLVPQVANAERFKVDLSPYPTISHINKELLALEVFQVSHPRRQPDTPAELRT.

At methionine 1 the chain carries N-acetylmethionine. A GST N-terminal domain is found at 4–87 (GKPILYSYFR…YLEETRPIPR (84 aa)). Glutathione contacts are provided by residues 14 to 19 (SSCSWR) and glutamine 45. N6-succinyllysine is present on lysine 57. Glutathione is bound by residues valine 59, 71 to 72 (QS), glutamine 111, and 115 to 117 (NLS). Positions 92 to 212 (DPQKRAIVRM…HPRRQPDTPA (121 aa)) constitute a GST C-terminal domain. Position 136 is a phosphothreonine (threonine 136). Serine 137 carries the phosphoserine modification. The residue at position 177 (lysine 177) is an N6-succinyllysine. Serine 181 carries the phosphoserine modification.

This sequence belongs to the GST superfamily. Zeta family. Homodimer. The cofactor is glutathione. Expressed in liver, kidney, seminal glands and breast.

The protein resides in the cytoplasm. The enzyme catalyses 4-maleylacetoacetate = 4-fumarylacetoacetate. The catalysed reaction is RX + glutathione = an S-substituted glutathione + a halide anion + H(+). Its pathway is amino-acid degradation; L-phenylalanine degradation; acetoacetate and fumarate from L-phenylalanine: step 5/6. Its function is as follows. Probable bifunctional enzyme showing minimal glutathione-conjugating activity with ethacrynic acid and 7-chloro-4-nitrobenz-2-oxa-1, 3-diazole and maleylacetoacetate isomerase activity. Also has low glutathione peroxidase activity with t-butyl and cumene hydroperoxides. Is able to catalyze the glutathione dependent oxygenation of dichloroacetic acid to glyoxylic acid. In Mus musculus (Mouse), this protein is Maleylacetoacetate isomerase (Gstz1).